The primary structure comprises 583 residues: Leucine aminopeptidase 2, chloroplastic (583 aa).

The transit peptide at 1–70 (MAVTLVTSFA…ISHATLGLTQ (70 aa)) directs the protein to the chloroplast. Mn(2+) is bound by residues lysine 351 and aspartate 356. Residue lysine 363 is part of the active site. Mn(2+) is bound by residues aspartate 376, aspartate 436, and glutamate 438. Arginine 440 is an active-site residue.

It belongs to the peptidase M17 family. In terms of assembly, homohexamer (dimer of homotrimers). Requires Mn(2+) as cofactor.

The protein resides in the plastid. Its subcellular location is the chloroplast. The catalysed reaction is Release of an N-terminal amino acid, Xaa-|-Yaa-, in which Xaa is preferably Leu, but may be other amino acids including Pro although not Arg or Lys, and Yaa may be Pro. Amino acid amides and methyl esters are also readily hydrolyzed, but rates on arylamides are exceedingly low.. It carries out the reaction Release of N-terminal proline from a peptide.. Presumably involved in the processing and regular turnover of intracellular proteins. Catalyzes the removal of unsubstituted N-terminal amino acids from various peptides. Possesses leucine aminopeptidase activity against the model substrate leucine-amido methyl coumarin. Does not seem to possess Cys-Gly dipeptidase activity. Its function is as follows. Functions as a molecular chaperone to protect proteins from heat-induced damage. The polypeptide is Leucine aminopeptidase 2, chloroplastic (Arabidopsis thaliana (Mouse-ear cress)).